We begin with the raw amino-acid sequence, 244 residues long: Glucosamine-6-phosphate deaminase (244 aa).

Catalysis depends on aspartate 67, which acts as the Proton acceptor; for enolization step. The active-site For ring-opening step is the asparagine 136. Histidine 138 functions as the Proton acceptor; for ring-opening step in the catalytic mechanism. Residue glutamate 143 is the For ring-opening step of the active site.

The protein belongs to the glucosamine/galactosamine-6-phosphate isomerase family. NagB subfamily.

The enzyme catalyses alpha-D-glucosamine 6-phosphate + H2O = beta-D-fructose 6-phosphate + NH4(+). Its pathway is amino-sugar metabolism; N-acetylneuraminate degradation; D-fructose 6-phosphate from N-acetylneuraminate: step 5/5. In terms of biological role, catalyzes the reversible isomerization-deamination of glucosamine 6-phosphate (GlcN6P) to form fructose 6-phosphate (Fru6P) and ammonium ion. This chain is Glucosamine-6-phosphate deaminase, found in Clostridium botulinum (strain 657 / Type Ba4).